Here is an 820-residue protein sequence, read N- to C-terminus: Phosphoenolpyruvate synthase (820 aa).

The active-site Tele-phosphohistidine intermediate is the H438. The substrate site is built by R539, R587, E689, G710, S711, N712, and D713. E689 is a binding site for Mg(2+). Mg(2+) is bound at residue D713. C762 serves as the catalytic Proton donor.

This sequence belongs to the PEP-utilizing enzyme family. It depends on Mg(2+) as a cofactor.

The catalysed reaction is pyruvate + ATP + H2O = phosphoenolpyruvate + AMP + phosphate + 2 H(+). It participates in carbohydrate biosynthesis; gluconeogenesis. Catalyzes the phosphorylation of pyruvate to phosphoenolpyruvate. The protein is Phosphoenolpyruvate synthase (ppsA) of Aeropyrum pernix (strain ATCC 700893 / DSM 11879 / JCM 9820 / NBRC 100138 / K1).